A 136-amino-acid chain; its full sequence is Histone H2B.5 (136 aa).

Residues 1–36 (MAPKAEKKPAAEKKPVETEKKPKAEKRVPGKDGGAD) show a composition bias toward basic and acidic residues. Residues 1–44 (MAPKAEKKPAAEKKPVETEKKPKAEKRVPGKDGGADKKKKKAKK) form a disordered region. Lys-7 and Lys-26 each carry N6-acetyllysine. Residue Lys-132 forms a Glycyl lysine isopeptide (Lys-Gly) (interchain with G-Cter in ubiquitin) linkage.

This sequence belongs to the histone H2B family. As to quaternary structure, the nucleosome is a histone octamer containing two molecules each of H2A, H2B, H3 and H4 assembled in one H3-H4 heterotetramer and two H2A-H2B heterodimers. The octamer wraps approximately 147 bp of DNA. Post-translationally, can be acetylated to form H2BK6ac and H2BK33ac. In terms of processing, monoubiquitinated to form H2BK143ub1; may give a specific tag for epigenetic transcriptional activation.

It localises to the nucleus. The protein localises to the chromosome. Functionally, core component of nucleosome. Nucleosomes wrap and compact DNA into chromatin, limiting DNA accessibility to the cellular machineries which require DNA as a template. Histones thereby play a central role in transcription regulation, DNA repair, DNA replication and chromosomal stability. DNA accessibility is regulated via a complex set of post-translational modifications of histones, also called histone code, and nucleosome remodeling. This chain is Histone H2B.5, found in Triticum aestivum (Wheat).